The following is a 122-amino-acid chain: Large ribosomal subunit protein uL14 (122 aa).

This sequence belongs to the universal ribosomal protein uL14 family. In terms of assembly, part of the 50S ribosomal subunit. Forms a cluster with proteins L3 and L19. In the 70S ribosome, L14 and L19 interact and together make contacts with the 16S rRNA in bridges B5 and B8.

In terms of biological role, binds to 23S rRNA. Forms part of two intersubunit bridges in the 70S ribosome. In Spiroplasma citri, this protein is Large ribosomal subunit protein uL14.